We begin with the raw amino-acid sequence, 496 residues long: Probable cytosol aminopeptidase (496 aa).

Mn(2+)-binding residues include Lys-266 and Asp-271. Lys-278 is an active-site residue. Mn(2+)-binding residues include Asp-289, Asp-348, and Glu-350. Residue Arg-352 is part of the active site.

The protein belongs to the peptidase M17 family. Requires Mn(2+) as cofactor.

It is found in the cytoplasm. It carries out the reaction Release of an N-terminal amino acid, Xaa-|-Yaa-, in which Xaa is preferably Leu, but may be other amino acids including Pro although not Arg or Lys, and Yaa may be Pro. Amino acid amides and methyl esters are also readily hydrolyzed, but rates on arylamides are exceedingly low.. The enzyme catalyses Release of an N-terminal amino acid, preferentially leucine, but not glutamic or aspartic acids.. In terms of biological role, presumably involved in the processing and regular turnover of intracellular proteins. Catalyzes the removal of unsubstituted N-terminal amino acids from various peptides. The chain is Probable cytosol aminopeptidase from Pseudomonas fluorescens (strain Pf0-1).